The primary structure comprises 642 residues: ATP-dependent zinc metalloprotease FtsH (642 aa).

The Cytoplasmic segment spans residues 1 to 6 (MGRFTK). A helical membrane pass occupies residues 7–27 (NIVLYLLIIAAFVIAIDAFSG). Residues 28–101 (QSANKSELSY…TAAPPEQPAW (74 aa)) are Extracellular-facing. The helical transmembrane segment at 102–122 (WMSLLGSAIPIIILVVLFFFI) threads the bilayer. At 123–642 (MQQTQGGGGR…LSEASSNEIK (520 aa)) the chain is on the cytoplasmic side. ATP is bound at residue 194–201 (GPPGTGKT). H416 serves as a coordination point for Zn(2+). The active site involves E417. Positions 420 and 492 each coordinate Zn(2+). Positions 597–610 (TTKEPEAEEPKVAS) are enriched in basic and acidic residues. The interval 597 to 642 (TTKEPEAEEPKVASEADSSIVPEGVDAKKTTSTVADLSEASSNEIK) is disordered. Polar residues predominate over residues 626–642 (TTSTVADLSEASSNEIK).

In the central section; belongs to the AAA ATPase family. It in the C-terminal section; belongs to the peptidase M41 family. As to quaternary structure, homohexamer. The cofactor is Zn(2+).

Its subcellular location is the cell membrane. Acts as a processive, ATP-dependent zinc metallopeptidase for both cytoplasmic and membrane proteins. Plays a role in the quality control of integral membrane proteins. This Veillonella parvula (strain ATCC 10790 / DSM 2008 / CCUG 5123 / JCM 12972 / NCTC 11810 / Te3) (Veillonella alcalescens) protein is ATP-dependent zinc metalloprotease FtsH.